The sequence spans 444 residues: IMP-specific 5'-nucleotidase 1 (444 aa).

Positions 132 and 150 each coordinate ATP. The active-site Nucleophile is D170. IMP-binding residues include D170, D172, D178, T204, S207, S308, D363, and K371. Residues D170 and D172 each contribute to the Mg(2+) site. The active-site Proton donor is the D172. Residue D394 participates in Mg(2+) binding.

It belongs to the ISN1 family. In terms of assembly, homotetramer. Mg(2+) is required as a cofactor.

It localises to the cytoplasm. It carries out the reaction IMP + H2O = inosine + phosphate. At physiological pH, allosterically activated by ATP. ATP binding is a prerequisite to magnesium and substrate binding. ATP binds to 2 of the subunits in the homotetramer inducing a closure of these 2 subunits and the release of the C-terminal loop, thereby activating the enzyme. In this conformation, the enzyme can bind IMP and magnesium which ultimately leads to the release of ATP. At pH 5, ATP does not have an allosteric role and is dispensable for magnesium and substrate binding. Inhibited by phosphocholine and D-myo-inositol-4-phosphate. Functionally, specifically, catalyzes the dephosphorylation of inosine monophosphate (IMP) into inosine. By dephosphorylating IMP, plays a role in the purine salvage pathway. Does not have phosphotransferase activity with IMP as phosphate donor and adenosine as phosphate acceptor. This chain is IMP-specific 5'-nucleotidase 1, found in Plasmodium falciparum (isolate 3D7).